A 316-amino-acid chain; its full sequence is Tyrosine--tRNA ligase 2 (316 aa).

L-tyrosine contacts are provided by Tyr-26, Tyr-146, Gln-150, Asp-153, and Gln-168. The 'KMSKS' region signature appears at 219 to 223; the sequence is KMSKS. Lys-222 contributes to the ATP binding site.

It belongs to the class-I aminoacyl-tRNA synthetase family. TyrS type 4 subfamily. Homodimer.

It is found in the cytoplasm. It carries out the reaction tRNA(Tyr) + L-tyrosine + ATP = L-tyrosyl-tRNA(Tyr) + AMP + diphosphate + H(+). Catalyzes the attachment of tyrosine to tRNA(Tyr) in a two-step reaction: tyrosine is first activated by ATP to form Tyr-AMP and then transferred to the acceptor end of tRNA(Tyr). The polypeptide is Tyrosine--tRNA ligase 2 (Pyrobaculum aerophilum (strain ATCC 51768 / DSM 7523 / JCM 9630 / CIP 104966 / NBRC 100827 / IM2)).